The sequence spans 501 residues: MVLVVDYGSQYSRLITRRIRENEVYSEVVFPDDKVDLSKVDAVILSGGPRSVYEEDAPKLPEWFQEYKGPVLAICYGMQLIVKELGGEVRRGRGEYGRTLVELSRDPIFEGIPEKVHVWMSHGDEVVRLPEGFHPIAVSETGVIAAATDGKRFWLLQFHPEVHHTEYGDRMISNFLFNVCKLEKNWKIGDLVEEKIRHIKETIGNKKAILALSGGVDSSVAAVLVHRAIGKNLVCVFVDHGLLRKNEREEVERVFKEHFDMNLVVVDARKRFLEKLRGVTDPEKKRKIIGEEFIRVFEEEAKKHDVEFLVQGTIYSDVIESAASGKTTAKIKSHHNVGGLPEKMNLKLVEPLRDLFKDEVRKVGKYLGIPDRIINRHPFPGPGLAVRVLGEVTEEKLEILREADYIFIETLRKHDYYDKVWQAFAVLLPIKSVGVKGDARAYEYVVALRAVNSVEGMTADWSRIPHDILDEAARRITREVKGVGRVVYDITSKPPATIEWE.

Positions 1–185 (MVLVVDYGSQ…LFNVCKLEKN (185 aa)) constitute a Glutamine amidotransferase type-1 domain. Cys-75 functions as the Nucleophile in the catalytic mechanism. Residues His-159 and Glu-161 contribute to the active site. The GMPS ATP-PPase domain maps to 186–376 (WKIGDLVEEK…LGIPDRIINR (191 aa)). 213 to 219 (SGGVDSS) serves as a coordination point for ATP.

In terms of assembly, homodimer.

It carries out the reaction XMP + L-glutamine + ATP + H2O = GMP + L-glutamate + AMP + diphosphate + 2 H(+). It functions in the pathway purine metabolism; GMP biosynthesis; GMP from XMP (L-Gln route): step 1/1. Its function is as follows. Catalyzes the synthesis of GMP from XMP. The sequence is that of GMP synthase [glutamine-hydrolyzing] (guaA) from Thermotoga maritima (strain ATCC 43589 / DSM 3109 / JCM 10099 / NBRC 100826 / MSB8).